The chain runs to 287 residues: uncharacterized protein (287 aa).

A compositionally biased stretch (basic and acidic residues) spans 1-17 (MRWQGRRESDNVEDRRN). The tract at residues 1-29 (MRWQGRRESDNVEDRRNSSGGPSMGGPGF) is disordered. A helical transmembrane segment spans residues 38 to 60 (LILLIVVLVAGYYGVDLTGLMTG).

The protein resides in the membrane. This is an uncharacterized protein from Escherichia coli O6:H1 (strain CFT073 / ATCC 700928 / UPEC).